A 232-amino-acid chain; its full sequence is tRNA (guanine-N(1)-)-methyltransferase (232 aa).

Residues glycine 114 and 134–139 each bind S-adenosyl-L-methionine; that span reads IGDYIL.

It belongs to the RNA methyltransferase TrmD family. As to quaternary structure, homodimer.

The protein resides in the cytoplasm. It carries out the reaction guanosine(37) in tRNA + S-adenosyl-L-methionine = N(1)-methylguanosine(37) in tRNA + S-adenosyl-L-homocysteine + H(+). In terms of biological role, specifically methylates guanosine-37 in various tRNAs. The protein is tRNA (guanine-N(1)-)-methyltransferase of Wolbachia pipientis subsp. Culex pipiens (strain wPip).